The sequence spans 89 residues: Small ribosomal subunit protein uS15 (89 aa).

The protein belongs to the universal ribosomal protein uS15 family. As to quaternary structure, part of the 30S ribosomal subunit. Forms a bridge to the 50S subunit in the 70S ribosome, contacting the 23S rRNA.

In terms of biological role, one of the primary rRNA binding proteins, it binds directly to 16S rRNA where it helps nucleate assembly of the platform of the 30S subunit by binding and bridging several RNA helices of the 16S rRNA. Functionally, forms an intersubunit bridge (bridge B4) with the 23S rRNA of the 50S subunit in the ribosome. The sequence is that of Small ribosomal subunit protein uS15 from Bartonella quintana (strain Toulouse) (Rochalimaea quintana).